Reading from the N-terminus, the 40-residue chain is Photosystem II reaction center protein Y (40 aa).

The chain crosses the membrane as a helical span at residues 5–23 (LIVVLAPILLAGGWAVFNI).

Belongs to the PsbY family. As to quaternary structure, PSII is composed of 1 copy each of membrane proteins PsbA, PsbB, PsbC, PsbD, PsbE, PsbF, PsbH, PsbI, PsbJ, PsbK, PsbL, PsbM, PsbT, PsbX, PsbY, PsbZ, Psb30/Ycf12, peripheral proteins PsbO, CyanoQ (PsbQ), PsbU, PsbV and a large number of cofactors. It forms dimeric complexes.

It is found in the cellular thylakoid membrane. In terms of biological role, loosely associated component of the core of photosystem II (PSII), it is not always seen in crystals. PSII is a light-driven water plastoquinone oxidoreductase, using light energy to abstract electrons from H(2)O, generating a proton gradient subsequently used for ATP formation. The protein is Photosystem II reaction center protein Y of Synechococcus elongatus (strain ATCC 33912 / PCC 7942 / FACHB-805) (Anacystis nidulans R2).